Here is a 120-residue protein sequence, read N- to C-terminus: Ribonuclease P protein component (120 aa).

Belongs to the RnpA family. Consists of a catalytic RNA component (M1 or rnpB) and a protein subunit.

It catalyses the reaction Endonucleolytic cleavage of RNA, removing 5'-extranucleotides from tRNA precursor.. In terms of biological role, RNaseP catalyzes the removal of the 5'-leader sequence from pre-tRNA to produce the mature 5'-terminus. It can also cleave other RNA substrates such as 4.5S RNA. The protein component plays an auxiliary but essential role in vivo by binding to the 5'-leader sequence and broadening the substrate specificity of the ribozyme. This Acidothermus cellulolyticus (strain ATCC 43068 / DSM 8971 / 11B) protein is Ribonuclease P protein component.